A 212-amino-acid chain; its full sequence is MPTLWDITPAVDTATPVWPGDTPVGIERVWRMEAGSPVNVARLTLSPHTGAHTDAPLHYDAEGVAIGEVPLDAYLGRCRVIHCIGASPVVTPQHLSGSLDDLPPRVLLRTYRNAPTAAWDSAFCAVAPDTIDLLAARGVKLIGIDTPSLDPQESKTMDAHHRIRTHRMAILEGIVLDDVAPGDYELIALPLKLTTLDASPVRAILRALPESQ.

Tryptophan 18 contributes to the substrate binding site. 3 residues coordinate Zn(2+): histidine 48, histidine 52, and aspartate 54. Residue histidine 58 is the Proton donor/acceptor of the active site. Residues histidine 160 and glutamate 172 each coordinate Zn(2+).

Belongs to the Cyclase 1 superfamily. KynB family. Homodimer. Requires Zn(2+) as cofactor.

It carries out the reaction N-formyl-L-kynurenine + H2O = L-kynurenine + formate + H(+). The protein operates within amino-acid degradation; L-tryptophan degradation via kynurenine pathway; L-kynurenine from L-tryptophan: step 2/2. Functionally, catalyzes the hydrolysis of N-formyl-L-kynurenine to L-kynurenine, the second step in the kynurenine pathway of tryptophan degradation. This Paraburkholderia phytofirmans (strain DSM 17436 / LMG 22146 / PsJN) (Burkholderia phytofirmans) protein is Kynurenine formamidase.